The following is a 232-amino-acid chain: 5'-methylthioadenosine/S-adenosylhomocysteine nucleosidase (232 aa).

The Proton acceptor role is filled by Glu12. Substrate contacts are provided by residues Gly78, Ile152, and 173 to 174 (ME). Catalysis depends on Asp197, which acts as the Proton donor.

This sequence belongs to the PNP/UDP phosphorylase family. MtnN subfamily. As to quaternary structure, homodimer.

The catalysed reaction is S-adenosyl-L-homocysteine + H2O = S-(5-deoxy-D-ribos-5-yl)-L-homocysteine + adenine. The enzyme catalyses S-methyl-5'-thioadenosine + H2O = 5-(methylsulfanyl)-D-ribose + adenine. It carries out the reaction 5'-deoxyadenosine + H2O = 5-deoxy-D-ribose + adenine. It functions in the pathway amino-acid biosynthesis; L-methionine biosynthesis via salvage pathway; S-methyl-5-thio-alpha-D-ribose 1-phosphate from S-methyl-5'-thioadenosine (hydrolase route): step 1/2. In terms of biological role, catalyzes the irreversible cleavage of the glycosidic bond in both 5'-methylthioadenosine (MTA) and S-adenosylhomocysteine (SAH/AdoHcy) to adenine and the corresponding thioribose, 5'-methylthioribose and S-ribosylhomocysteine, respectively. Also cleaves 5'-deoxyadenosine, a toxic by-product of radical S-adenosylmethionine (SAM) enzymes, into 5-deoxyribose and adenine. Thus, is required for in vivo function of the radical SAM enzymes biotin synthase and lipoic acid synthase, that are inhibited by 5'-deoxyadenosine accumulation. The polypeptide is 5'-methylthioadenosine/S-adenosylhomocysteine nucleosidase (Salmonella choleraesuis (strain SC-B67)).